The primary structure comprises 450 residues: MKVIDQFKNKKVLVLGLAKSGESAARLLDKLGAIVTVNDGKPFEDNPAAQCLLEEGIKVITGGHPLELLDEEFALMVKNPGIPYSNPMIEKALAKGIPVLTEVELAYLISEAPIIGITGSNGKTTTTTMIGEVLTAAGQHGLLSGNIGYPASQVAQIASDKDTLVMELSSFQLMGVQEFHPEIAVITNLMPTHIDYHGLFEEYVAAKWNIQNKMTAADFLVLNFNQDLVKDLASKTEATVVPFSTLEKVDGAYLEDGQLYFRGEVVMAANEIGVPGSHNVENALATIAVAKLRDVDNQTIKETLSAFGGVKHRLQFVDDIKGVKFYNDSKSTNILATQKALSGFDNSKVVLIAGGLDRGNEFDELVPDITGLKKMVILGQSAERVKRAADKAGVAYVEATDIADATRKAYELATQGDVVLLSPANASWDMYANFEVRGDLFIDTVAELKE.

119–125 (GSNGKTT) serves as a coordination point for ATP.

This sequence belongs to the MurCDEF family.

The protein resides in the cytoplasm. The enzyme catalyses UDP-N-acetyl-alpha-D-muramoyl-L-alanine + D-glutamate + ATP = UDP-N-acetyl-alpha-D-muramoyl-L-alanyl-D-glutamate + ADP + phosphate + H(+). It participates in cell wall biogenesis; peptidoglycan biosynthesis. Its function is as follows. Cell wall formation. Catalyzes the addition of glutamate to the nucleotide precursor UDP-N-acetylmuramoyl-L-alanine (UMA). The polypeptide is UDP-N-acetylmuramoylalanine--D-glutamate ligase (Streptococcus pneumoniae (strain JJA)).